Here is a 906-residue protein sequence, read N- to C-terminus: Patched domain-containing protein 3 (906 aa).

The interval 1–70 (MISSKVAPGE…LGQEAPPPRR (70 aa)) is disordered. N-linked (GlcNAc...) asparagine glycosylation is found at Asn148 and Asn235. A run of 11 helical transmembrane segments spans residues 338–358 (TVIP…VVSC), 370–390 (VAVF…GLML), 392–412 (LGVP…GVGV), 442–462 (VAVS…TGIT), 476–496 (GTTL…VMAL), 559–579 (FIVV…CFQV), 760–780 (VMIA…HPVC), 782–802 (LWVT…MAFW), 814–834 (LVIC…AFVS), 848–868 (LYLL…GVCV), and 883–903 (IMFL…PVFL). The 158-residue stretch at 339–496 (VIPLFHLAYI…ITCFGAVMAL (158 aa)) folds into the SSD domain.

It belongs to the patched family. In terms of tissue distribution, expressed in germ cells of the testis (at protein level).

The protein localises to the cell projection. The protein resides in the cilium. Its subcellular location is the flagellum membrane. It localises to the endoplasmic reticulum membrane. Functionally, may play a role in sperm development or sperm function. However, does not appear to have an essential role in spermatogenesis or male fertility. This chain is Patched domain-containing protein 3 (Ptchd3), found in Mus musculus (Mouse).